The chain runs to 751 residues: Pyridoxal-dependent decarboxylase domain-containing protein 1 (751 aa).

Residues 659–751 (QMRKEDSPDS…QEAESVETIR (93 aa)) are disordered. Positions 690-702 (DSISETSSVSQLE) are enriched in polar residues. Residues 720-729 (PQERPAHILE) show a composition bias toward basic and acidic residues. A compositionally biased stretch (acidic residues) spans 742–751 (QEAESVETIR).

It belongs to the group II decarboxylase family. Pyridoxal 5'-phosphate serves as cofactor.

The sequence is that of Pyridoxal-dependent decarboxylase domain-containing protein 1 (pdxdc1) from Danio rerio (Zebrafish).